The primary structure comprises 282 residues: Undecaprenyl-diphosphatase (282 aa).

The next 6 helical transmembrane spans lie at T51 to I71, M87 to T107, S115 to G135, A191 to Y211, N229 to L249, and I259 to V279.

It belongs to the UppP family.

Its subcellular location is the cell inner membrane. It catalyses the reaction di-trans,octa-cis-undecaprenyl diphosphate + H2O = di-trans,octa-cis-undecaprenyl phosphate + phosphate + H(+). Functionally, catalyzes the dephosphorylation of undecaprenyl diphosphate (UPP). Confers resistance to bacitracin. This chain is Undecaprenyl-diphosphatase, found in Pelodictyon phaeoclathratiforme (strain DSM 5477 / BU-1).